A 351-amino-acid chain; its full sequence is UDP-3-O-acylglucosamine N-acyltransferase (351 aa).

Histidine 240 (proton acceptor) is an active-site residue.

Belongs to the transferase hexapeptide repeat family. LpxD subfamily. As to quaternary structure, homotrimer.

It carries out the reaction a UDP-3-O-[(3R)-3-hydroxyacyl]-alpha-D-glucosamine + a (3R)-hydroxyacyl-[ACP] = a UDP-2-N,3-O-bis[(3R)-3-hydroxyacyl]-alpha-D-glucosamine + holo-[ACP] + H(+). Its pathway is bacterial outer membrane biogenesis; LPS lipid A biosynthesis. In terms of biological role, catalyzes the N-acylation of UDP-3-O-acylglucosamine using 3-hydroxyacyl-ACP as the acyl donor. Is involved in the biosynthesis of lipid A, a phosphorylated glycolipid that anchors the lipopolysaccharide to the outer membrane of the cell. The chain is UDP-3-O-acylglucosamine N-acyltransferase from Pseudomonas syringae pv. syringae (strain B728a).